A 551-amino-acid polypeptide reads, in one-letter code: Ubiquitin carboxyl-terminal hydrolase 24 (551 aa).

Disordered stretches follow at residues 51–104 (NSSV…SLRV) and 163–188 (NEDFSSDSSSGSIQRKKNLKVPTESV). The USP domain maps to 197-551 (RGLINAGNLC…QAYVLFYKQV (355 aa)). The Nucleophile role is filled by Cys206. The span at 329-338 (SKSSVISSAN) shows a compositional bias: polar residues. A disordered region spans residues 329–349 (SKSSVISSANDDGDEWETVGP). His510 serves as the catalytic Proton acceptor.

This sequence belongs to the peptidase C19 family.

The enzyme catalyses Thiol-dependent hydrolysis of ester, thioester, amide, peptide and isopeptide bonds formed by the C-terminal Gly of ubiquitin (a 76-residue protein attached to proteins as an intracellular targeting signal).. Recognizes and hydrolyzes the peptide bond at the C-terminal Gly of ubiquitin. Involved in the processing of poly-ubiquitin precursors as well as that of ubiquitinated proteins. The polypeptide is Ubiquitin carboxyl-terminal hydrolase 24 (UBP24) (Arabidopsis thaliana (Mouse-ear cress)).